Reading from the N-terminus, the 282-residue chain is HTH-type transcriptional activator RhaR (282 aa).

Residues Asp-179–Leu-277 enclose the HTH araC/xylS-type domain. 2 DNA-binding regions (H-T-H motif) span residues Asp-196–Thr-217 and Ile-244–Thr-267.

Binds DNA as a dimer.

It is found in the cytoplasm. Activates expression of the rhaSR operon in response to L-rhamnose. This Salmonella schwarzengrund (strain CVM19633) protein is HTH-type transcriptional activator RhaR.